The primary structure comprises 1377 residues: DNA-directed RNA polymerase subunit beta' (1377 aa).

4 residues coordinate Zn(2+): cysteine 60, cysteine 62, cysteine 75, and cysteine 78. Aspartate 449, aspartate 451, and aspartate 453 together coordinate Mg(2+). Positions 777, 851, 858, and 861 each coordinate Zn(2+).

It belongs to the RNA polymerase beta' chain family. As to quaternary structure, the RNAP catalytic core consists of 2 alpha, 1 beta, 1 beta' and 1 omega subunit. When a sigma factor is associated with the core the holoenzyme is formed, which can initiate transcription. Mg(2+) is required as a cofactor. Zn(2+) serves as cofactor.

The catalysed reaction is RNA(n) + a ribonucleoside 5'-triphosphate = RNA(n+1) + diphosphate. In terms of biological role, DNA-dependent RNA polymerase catalyzes the transcription of DNA into RNA using the four ribonucleoside triphosphates as substrates. The chain is DNA-directed RNA polymerase subunit beta' from Borrelia hermsii (strain HS1 / DAH).